The chain runs to 235 residues: MSKTSKAYRAAAAKVDRTNLYTPLQAAKLAKETSSTKQDATVEVAIRLGVDPRKADQMVRGTVNLPHGTGKTARVAVFAVGEKADAAVAAGADVVGSDDLIERIQGGWLEFDAAIAAPDQMAKVGRIARVLGPRGLMPNPKTGTVTADVAKAVADIKGGKINFRVDKQANLHFVIGKASFDEKLLAENYGAAIDEVLRLKPSSSKGRYLKKITVSTTTGPGIPVDPSITRNFAGE.

Belongs to the universal ribosomal protein uL1 family. As to quaternary structure, part of the 50S ribosomal subunit.

Functionally, binds directly to 23S rRNA. The L1 stalk is quite mobile in the ribosome, and is involved in E site tRNA release. Its function is as follows. Protein L1 is also a translational repressor protein, it controls the translation of the L11 operon by binding to its mRNA. In Mycobacterium bovis (strain ATCC BAA-935 / AF2122/97), this protein is Large ribosomal subunit protein uL1.